The following is an 849-amino-acid chain: G-type lectin S-receptor-like serine/threonine-protein kinase B120 (849 aa).

A signal peptide spans 1–25 (MRFFRKTSLYLSLFLYFFLYESSMA). The Bulb-type lectin domain maps to 26–153 (ANTIRRGESL…DTDRPIWESF (128 aa)). Residues 26–438 (ANTIRRGESL…SEVGENRKTK (413 aa)) are Extracellular-facing. Residues N110, N191, N210, N230, N273, and N282 are each glycosylated (N-linked (GlcNAc...) asparagine). An EGF-like; atypical domain is found at 295 to 332 (PDSECDQYNRCGKFGICDMKGSNGICSCIHGYEQVSVG). 2 disulfides stabilise this stretch: C299/C311 and C305/C320. N-linked (GlcNAc...) asparagine glycosylation is found at N333, N349, and N388. One can recognise a PAN domain in the interval 346-427 (CERNISVGED…GGSSLHIRLA (82 aa)). 2 disulfides stabilise this stretch: C381–C402 and C385–C391. The helical transmembrane segment at 439 to 459 (IAVIVAVLVGVILIGIFALLL) threads the bilayer. Residues 460–849 (WRFKRKKDVS…EITSTVVLGR (390 aa)) lie on the Cytoplasmic side of the membrane. A Protein kinase domain is found at 529-814 (FCKENELGRG…TLAAPRQPTF (286 aa)). ATP-binding positions include 535–543 (LGRGGFGPV) and K557. The residue at position 563 (S563) is a Phosphoserine. Residues 618–635 (TKQALIDWKLRFSIIEGI) are caM-binding. D654 functions as the Proton acceptor in the catalytic mechanism. 2 positions are modified to phosphoserine: S658 and S671. Position 688 is a phosphothreonine (T688). S732 and S837 each carry phosphoserine. Phosphothreonine is present on T844.

The protein belongs to the protein kinase superfamily. Ser/Thr protein kinase family.

The protein localises to the cell membrane. It carries out the reaction L-seryl-[protein] + ATP = O-phospho-L-seryl-[protein] + ADP + H(+). The enzyme catalyses L-threonyl-[protein] + ATP = O-phospho-L-threonyl-[protein] + ADP + H(+). The chain is G-type lectin S-receptor-like serine/threonine-protein kinase B120 (B120) from Arabidopsis thaliana (Mouse-ear cress).